We begin with the raw amino-acid sequence, 391 residues long: Multidrug resistance protein MdtL (391 aa).

The next 12 membrane-spanning stretches (helical) occupy residues 4 to 24, 42 to 62, 69 to 89, 93 to 113, 131 to 151, 158 to 178, 203 to 222, 245 to 265, 269 to 289, 293 to 313, 324 to 346, and 363 to 383; these read FLIC…MYLV, IAFS…GKVA, PVAI…SLAE, LFLA…VVAF, LLNG…HLIM, SLFW…LFIL, FFLS…LTFV, ALTA…LGIF, TLMI…AVSP, ISLF…GVAM, AGVA…IWLA, and ACSI…PVAA.

This sequence belongs to the major facilitator superfamily. DHA1 family. MdtL (TC 2.A.1.2.22) subfamily.

It localises to the cell inner membrane. Confers resistance to chloramphenicol. This is Multidrug resistance protein MdtL from Escherichia fergusonii (strain ATCC 35469 / DSM 13698 / CCUG 18766 / IAM 14443 / JCM 21226 / LMG 7866 / NBRC 102419 / NCTC 12128 / CDC 0568-73).